Reading from the N-terminus, the 181-residue chain is Transcriptional repressor NrdR (181 aa).

Residues 3-34 (CLFCQHTYTRVIDSRVSEDGATIRRRRECEAC) fold into a zinc finger. In terms of domain architecture, ATP-cone spans 49–139 (PVIIKKDGGR…VYRSFQDVAD (91 aa)).

The protein belongs to the NrdR family. It depends on Zn(2+) as a cofactor.

In terms of biological role, negatively regulates transcription of bacterial ribonucleotide reductase nrd genes and operons by binding to NrdR-boxes. In Xylella fastidiosa (strain 9a5c), this protein is Transcriptional repressor NrdR.